The following is a 336-amino-acid chain: MLALGKLLELTLAGREPAEKTQLTVEGVRMRWLSEGALEVRPPEARDNGLDLLLSAGIHGNETAPIELLDRLLHDIARGDLKPRARILFLFGNPEAIRKGERFVEQDVNRLFNGRHEQSSGSEALRACELERLAASFFSLPDRQRLHYDLHTAIRGSKIEQFALYPWKEGRQHSRLELARLRAAGMEAVLLQNKPSIVFSSYTYDKLGAESFTLELGKARPFGQNAGVNVSLLETRLKQIIEGTEPEMAEQGLDGLQLFSVAREIIKHSDAFRLNLPADIENFSELDVGYVLAEDLANTRWIIEEQGARIIFPNPKVKNGLRAGILIVPTTDENLA.

Zn(2+) contacts are provided by H59, E62, and H151. E215 is an active-site residue.

The protein belongs to the AspA/AstE family. Succinylglutamate desuccinylase subfamily. It depends on Zn(2+) as a cofactor.

It catalyses the reaction N-succinyl-L-glutamate + H2O = L-glutamate + succinate. The protein operates within amino-acid degradation; L-arginine degradation via AST pathway; L-glutamate and succinate from L-arginine: step 5/5. Its function is as follows. Transforms N(2)-succinylglutamate into succinate and glutamate. The sequence is that of Succinylglutamate desuccinylase from Pseudomonas fluorescens (strain Pf0-1).